An 89-amino-acid chain; its full sequence is Small ribosomal subunit protein uS15 (89 aa).

It belongs to the universal ribosomal protein uS15 family. In terms of assembly, part of the 30S ribosomal subunit. Forms a bridge to the 50S subunit in the 70S ribosome, contacting the 23S rRNA.

In terms of biological role, one of the primary rRNA binding proteins, it binds directly to 16S rRNA where it helps nucleate assembly of the platform of the 30S subunit by binding and bridging several RNA helices of the 16S rRNA. Forms an intersubunit bridge (bridge B4) with the 23S rRNA of the 50S subunit in the ribosome. The chain is Small ribosomal subunit protein uS15 from Chloroherpeton thalassium (strain ATCC 35110 / GB-78).